The chain runs to 623 residues: tRNA uridine 5-carboxymethylaminomethyl modification enzyme MnmG (623 aa).

Residue 10 to 15 (GGGHAG) participates in FAD binding. Residue 269–283 (GPRYCPSIEDKIVRF) coordinates NAD(+).

Belongs to the MnmG family. As to quaternary structure, homodimer. Heterotetramer of two MnmE and two MnmG subunits. FAD is required as a cofactor.

The protein localises to the cytoplasm. NAD-binding protein involved in the addition of a carboxymethylaminomethyl (cmnm) group at the wobble position (U34) of certain tRNAs, forming tRNA-cmnm(5)s(2)U34. The protein is tRNA uridine 5-carboxymethylaminomethyl modification enzyme MnmG of Rhizobium meliloti (strain 1021) (Ensifer meliloti).